Here is a 146-residue protein sequence, read N- to C-terminus: MATQPATESVQCFGRKKTAVAVTHCKRGSGLIKLNGCPIELFQPEILRFKIFEPILLLGKHRFAGVNMRIRVNGGGHTSQVYAIRQSIAKALVAYYQKYVDEQSKKEIKDILVRYDRTLLVADPRRCEPKKFGGRGARSRYQKSYR.

This sequence belongs to the universal ribosomal protein uS9 family.

In Arabidopsis thaliana (Mouse-ear cress), this protein is Small ribosomal subunit protein uS9z (RPS16A).